The primary structure comprises 73 residues: Small, acid-soluble spore protein C5 (73 aa).

Belongs to the alpha/beta-type SASP family.

Functionally, SASP are bound to spore DNA. They are double-stranded DNA-binding proteins that cause DNA to change to an a-like conformation. They protect the DNA backbone from chemical and enzymatic cleavage and are thus involved in dormant spore's high resistance to UV light. In Priestia megaterium (Bacillus megaterium), this protein is Small, acid-soluble spore protein C5 (SASP-C5).